The chain runs to 179 residues: Translation initiation factor IF-3 (179 aa).

The protein belongs to the IF-3 family. As to quaternary structure, monomer.

The protein resides in the cytoplasm. Its function is as follows. IF-3 binds to the 30S ribosomal subunit and shifts the equilibrium between 70S ribosomes and their 50S and 30S subunits in favor of the free subunits, thus enhancing the availability of 30S subunits on which protein synthesis initiation begins. This is Translation initiation factor IF-3 from Bradyrhizobium diazoefficiens (strain JCM 10833 / BCRC 13528 / IAM 13628 / NBRC 14792 / USDA 110).